We begin with the raw amino-acid sequence, 214 residues long: Adenylate kinase (214 aa).

ATP is bound at residue 10–15; that stretch reads GAGKGT. The interval 30 to 59 is NMP; the sequence is STGDMLRAAVKAGTPLGLEAKKVMDAGQLV. AMP-binding positions include threonine 31, arginine 36, 57 to 59, 85 to 88, and glutamine 92; these read QLV and GFPR. The interval 122–159 is LID; the sequence is GRRVHPGSGRVYHIVFNQPKVEGKDDVTGEDLAIRPDD. Residues arginine 123 and 132–133 each bind ATP; that span reads VY. Positions 156 and 167 each coordinate AMP. An ATP-binding site is contributed by glutamine 200.

This sequence belongs to the adenylate kinase family. As to quaternary structure, monomer.

The protein resides in the cytoplasm. It catalyses the reaction AMP + ATP = 2 ADP. It participates in purine metabolism; AMP biosynthesis via salvage pathway; AMP from ADP: step 1/1. Functionally, catalyzes the reversible transfer of the terminal phosphate group between ATP and AMP. Plays an important role in cellular energy homeostasis and in adenine nucleotide metabolism. The sequence is that of Adenylate kinase from Shewanella halifaxensis (strain HAW-EB4).